Here is a 219-residue protein sequence, read N- to C-terminus: Cytochrome b6 (219 aa).

The helical transmembrane segment at 32 to 52 (IFYCFGGIVLTCFIIQAATGF) threads the bilayer. Position 35 (Cys35) interacts with heme c. His86 and His100 together coordinate heme b. 3 helical membrane passes run 90 to 110 (SGLM…TAGF), 116 to 136 (LTWI…VTGY), and 190 to 210 (AHTF…FLMI). Residues His191 and His206 each coordinate heme b.

Belongs to the cytochrome b family. PetB subfamily. In terms of assembly, the 4 large subunits of the cytochrome b6-f complex are cytochrome b6, subunit IV (17 kDa polypeptide, PetD), cytochrome f and the Rieske protein, while the 4 small subunits are PetG, PetL, PetM and PetN. The complex functions as a dimer. Heme b serves as cofactor. The cofactor is heme c.

It is found in the plastid. The protein resides in the chloroplast thylakoid membrane. In terms of biological role, component of the cytochrome b6-f complex, which mediates electron transfer between photosystem II (PSII) and photosystem I (PSI), cyclic electron flow around PSI, and state transitions. The chain is Cytochrome b6 from Amphidinium operculatum (Dinoflagellate).